The following is a 375-amino-acid chain: MKYTYKISKVKISGDLMVFGKIEEEFKEFLESRRKYNEFIKNGLIDEDEALKLFKIDNWRDYLKLFDIASRVRDYFKKKIEITSTIHITNICHVNPKCLYCGFAAGTSKEGYYEPFRLTDEEIKKSAIAIEESGIKRVSCSSAHGYQGKEVIRALKIVKKYTNLEVLVNAGADLTEESIKELKKYGIDTICCNLETINENLFKKVKPGEELEDRIRVCKLVNKYDIELSTGLLIGIGESYEDRVEHLFYLKNELNVGEIPIMGFNPYKGTPMENHPKCSALEQAKTIAITRLIFPNIRITSPTPTIGAELVQFALFGGASNVATVIPKNHPMNVKGVGNPKTGNLEEVVKMIMDLGLKPKLDWRRYENYLKIYGK.

Residues 78-302 form the Radical SAM core domain; the sequence is KKIEITSTIH…IFPNIRITSP (225 aa). Residues cysteine 92, cysteine 98, and cysteine 101 each coordinate [4Fe-4S] cluster.

It depends on [4Fe-4S] cluster as a cofactor.

This is an uncharacterized protein from Methanocaldococcus jannaschii (strain ATCC 43067 / DSM 2661 / JAL-1 / JCM 10045 / NBRC 100440) (Methanococcus jannaschii).